The chain runs to 601 residues: MAPGDEMRKFTRSFFRACPDLSSVTHAIVRQKFLIHVGRDHLEPEEKQALKRLVEEELPKMQADAGTREGKPDFIKVKRSPAPCSDPKKKRFRFNSESESSSSPSSPDGSGPSTKNRTTKKTCLRRALKKAVESTDEDHQTDLDAKMGLEESSEGEAEGSVRSGKVTEEEEDMKQEQKGQVRKQAGAKDKQVPLKADRKQVREESGSSEEEAVLQRAKVEGSTGANCQEESEESGEESPAKKKELSEPRSRSNRAERTARERKSYKQKSRPGRPTGGLRDSEAEKEGGTVGSGDSSEEGEAEKEGGTVGSGDSSEKGEAEKEEGTVGSGDSSEEGEEHSVKRKSKVRTQTESGRRQNTSSRDDSNSTQEQAAAQGTTKSGSLGSSNGDSDTEREVSDSQAGQNTKEERKSRSSNKSSKNGQARSCSSSSDSSPEPTGQKGKARSSSSSSDSGPEPTGRKAASRCGEDHPAVARLKRYIRACGAHRNYKKLLGSCSSHKARLSVLRAELEALGMKGNPSLEKCRALKLQREEAAEVAALDVANIISSTGRPRRRNAWNPSGEGTSPGETYRRTLDSEEEQPRQAPPDWSHMRDIISSDGDSS.

Disordered regions lie at residues 60–469 (KMQA…EDHP) and 546–601 (STGR…GDSS). The segment covering 66–76 (GTREGKPDFIK) has biased composition (basic and acidic residues). Serine 85, serine 96, and serine 98 each carry phosphoserine. The span at 97-113 (ESESSSSPSSPDGSGPS) shows a compositional bias: low complexity. The segment covering 117-129 (RTTKKTCLRRALK) has biased composition (basic residues). Residues 130–149 (KAVESTDEDHQTDLDAKMGL) are compositionally biased toward basic and acidic residues. Phosphoserine is present on serine 134. Residues threonine 135 and threonine 141 each carry the phosphothreonine modification. 3 positions are modified to phosphoserine: serine 152, serine 153, and serine 163. Position 167 is a phosphothreonine (threonine 167). Positions 186–205 (GAKDKQVPLKADRKQVREES) are enriched in basic and acidic residues. A phosphoserine mark is found at serine 205, serine 207, serine 208, serine 231, serine 234, serine 238, serine 313, serine 359, serine 360, serine 384, and serine 389. Composition is skewed to basic and acidic residues over residues 238–264 (SPAK…ERKS) and 313–324 (SSEKGEAEKEEG). Positions 347-378 (RTQTESGRRQNTSSRDDSNSTQEQAAAQGTTK) are enriched in polar residues. Residues 379–388 (SGSLGSSNGD) are compositionally biased toward low complexity. Threonine 391 bears the Phosphothreonine mark. Serine 396 and serine 398 each carry phosphoserine. Residues 413–432 (SNKSSKNGQARSCSSSSDSS) are compositionally biased toward low complexity. The interval 429-572 (SDSSPEPTGQ…TSPGETYRRT (144 aa)) is interaction with the histone H2A-H2B complex. Residues 556-566 (WNPSGEGTSPG) show a composition bias toward polar residues. Phosphoserine is present on residues serine 564, serine 575, serine 595, serine 596, and serine 600. Residues 568–580 (TYRRTLDSEEEQP) show a composition bias toward basic and acidic residues.

Interacts (via C-terminus) with histone H2A-H2B dimers; the interaction is direct. Interacts with HIRA. Interacts with CK2. Phosphorylated by CK2.

It localises to the nucleus. Functionally, histone chaperone that carries a H2A-H2B histone complex and facilitates its deposition onto chromatin. This chain is HIRA-interacting protein 3, found in Mus musculus (Mouse).